We begin with the raw amino-acid sequence, 347 residues long: Phosphate acyltransferase (347 aa).

Belongs to the PlsX family. Homodimer. Probably interacts with PlsY.

The protein localises to the cytoplasm. It catalyses the reaction a fatty acyl-[ACP] + phosphate = an acyl phosphate + holo-[ACP]. The protein operates within lipid metabolism; phospholipid metabolism. Its function is as follows. Catalyzes the reversible formation of acyl-phosphate (acyl-PO(4)) from acyl-[acyl-carrier-protein] (acyl-ACP). This enzyme utilizes acyl-ACP as fatty acyl donor, but not acyl-CoA. The chain is Phosphate acyltransferase from Rhizobium meliloti (strain 1021) (Ensifer meliloti).